Here is a 244-residue protein sequence, read N- to C-terminus: Mitochondrial import inner membrane translocase subunit Tim21 (244 aa).

The transit peptide at 1-18 directs the protein to the mitochondrion; sequence MICTLLRAVRCTERLHGC. The segment at 69–89 is disordered; it reads VRSPQSAKEDGSKQVSVHRSQ. A helical transmembrane segment spans residues 108-128; that stretch reads FTYLIVVLIGISITGGLFYTI.

It belongs to the TIM21 family. Component of the TIM23 complex. Component of the MITRAC (mitochondrial translation regulation assembly intermediate of cytochrome c oxidase complex) complex, the core components of this complex being COA3/MITRAC12 and COX14. Interacts with COA3 and MT-CO1/COX1.

Its subcellular location is the mitochondrion membrane. Functionally, participates in the translocation of transit peptide-containing proteins across the mitochondrial inner membrane. Also required for assembly of mitochondrial respiratory chain complex I and complex IV as component of the MITRAC (mitochondrial translation regulation assembly intermediate of cytochrome c oxidase complex) complex. Probably shuttles between the presequence translocase and respiratory-chain assembly intermediates in a process that promotes incorporation of early nuclear-encoded subunits into these complexes. This is Mitochondrial import inner membrane translocase subunit Tim21 (TIMM21) from Bos taurus (Bovine).